The following is a 238-amino-acid chain: 2,3,4,5-tetrahydropyridine-2,6-dicarboxylate N-acetyltransferase (238 aa).

Belongs to the transferase hexapeptide repeat family. DapH subfamily.

The enzyme catalyses (S)-2,3,4,5-tetrahydrodipicolinate + acetyl-CoA + H2O = L-2-acetamido-6-oxoheptanedioate + CoA. Its pathway is amino-acid biosynthesis; L-lysine biosynthesis via DAP pathway; LL-2,6-diaminopimelate from (S)-tetrahydrodipicolinate (acetylase route): step 1/3. Its function is as follows. Catalyzes the transfer of an acetyl group from acetyl-CoA to tetrahydrodipicolinate. The polypeptide is 2,3,4,5-tetrahydropyridine-2,6-dicarboxylate N-acetyltransferase (Thermotoga neapolitana (strain ATCC 49049 / DSM 4359 / NBRC 107923 / NS-E)).